Consider the following 281-residue polypeptide: Probable endonuclease 4 (281 aa).

Residues histidine 69, histidine 109, glutamate 145, aspartate 179, histidine 182, histidine 216, aspartate 229, histidine 231, and glutamate 261 each coordinate Zn(2+).

The protein belongs to the AP endonuclease 2 family. It depends on Zn(2+) as a cofactor.

It catalyses the reaction Endonucleolytic cleavage to 5'-phosphooligonucleotide end-products.. Endonuclease IV plays a role in DNA repair. It cleaves phosphodiester bonds at apurinic or apyrimidinic (AP) sites, generating a 3'-hydroxyl group and a 5'-terminal sugar phosphate. This is Probable endonuclease 4 from Nautilia profundicola (strain ATCC BAA-1463 / DSM 18972 / AmH).